The primary structure comprises 20 residues: Elastase (20 aa).

The Peptidase S1 domain occupies 1-20 (VVGGEVARAHSWPWQISLQY).

Belongs to the peptidase S1 family. Elastase subfamily.

Digests most rapidly at the C-terminal side of alanine residues, but also cleaves at valine and leucine residues. The polypeptide is Elastase (Gadus morhua (Atlantic cod)).